Here is a 490-residue protein sequence, read N- to C-terminus: Bifunctional protein HldE (490 aa).

The interval 1 to 330 is ribokinase; sequence MLDFEQLSPA…RKILPHAFLA (330 aa). 205-208 provides a ligand contact to ATP; that stretch reads NRKE. Asp-275 is an active-site residue. Residues 358–490 form a cytidylyltransferase region; the sequence is FTNGCFDILH…LVARAQNGKS (133 aa).

It in the N-terminal section; belongs to the carbohydrate kinase PfkB family. The protein in the C-terminal section; belongs to the cytidylyltransferase family. Homodimer.

It catalyses the reaction D-glycero-beta-D-manno-heptose 7-phosphate + ATP = D-glycero-beta-D-manno-heptose 1,7-bisphosphate + ADP + H(+). It carries out the reaction D-glycero-beta-D-manno-heptose 1-phosphate + ATP + H(+) = ADP-D-glycero-beta-D-manno-heptose + diphosphate. It participates in nucleotide-sugar biosynthesis; ADP-L-glycero-beta-D-manno-heptose biosynthesis; ADP-L-glycero-beta-D-manno-heptose from D-glycero-beta-D-manno-heptose 7-phosphate: step 1/4. The protein operates within nucleotide-sugar biosynthesis; ADP-L-glycero-beta-D-manno-heptose biosynthesis; ADP-L-glycero-beta-D-manno-heptose from D-glycero-beta-D-manno-heptose 7-phosphate: step 3/4. Catalyzes the phosphorylation of D-glycero-D-manno-heptose 7-phosphate at the C-1 position to selectively form D-glycero-beta-D-manno-heptose-1,7-bisphosphate. Functionally, catalyzes the ADP transfer from ATP to D-glycero-beta-D-manno-heptose 1-phosphate, yielding ADP-D-glycero-beta-D-manno-heptose. The polypeptide is Bifunctional protein HldE (Rhodopseudomonas palustris (strain BisA53)).